We begin with the raw amino-acid sequence, 155 residues long: Ribosome maturation factor RimP (155 aa).

Belongs to the RimP family.

The protein resides in the cytoplasm. In terms of biological role, required for maturation of 30S ribosomal subunits. This chain is Ribosome maturation factor RimP, found in Macrococcus caseolyticus (strain JCSC5402) (Macrococcoides caseolyticum).